Reading from the N-terminus, the 1210-residue chain is Ice nucleation protein (1210 aa).

The segment at 165–1156 (AVYGSTLTGA…LSGGENSTLI (992 aa)) is octapeptide periodicity.

This sequence belongs to the bacterial ice nucleation protein family.

The protein resides in the cell outer membrane. Ice nucleation proteins enable bacteria to nucleate crystallization in supercooled water. The sequence is that of Ice nucleation protein (inaW) from Pseudomonas fluorescens.